A 316-amino-acid chain; its full sequence is Probable cell division protein WhiA (316 aa).

A DNA-binding region (H-T-H motif) is located at residues 275 to 309 (TLKELGEMVASGKISKSGINHRLRKLDEIAEQLRT).

It belongs to the WhiA family.

In terms of biological role, involved in cell division and chromosome segregation. The polypeptide is Probable cell division protein WhiA (Bacillus velezensis (strain DSM 23117 / BGSC 10A6 / LMG 26770 / FZB42) (Bacillus amyloliquefaciens subsp. plantarum)).